A 418-amino-acid chain; its full sequence is Actin-related protein 3 (418 aa).

Ala2 carries the post-translational modification N-acetylalanine. Lys240, Lys244, Lys251, and Lys254 each carry N6-acetyllysine.

Belongs to the actin family. ARP3 subfamily. Component of the Arp2/3 complex composed of ACTR2/ARP2, ACTR3/ARP3, ARPC1B/p41-ARC, ARPC2/p34-ARC, ARPC3/p21-ARC, ARPC4/p20-ARC and ARPC5/p16-ARC. Interacts with WHDC1. Interacts weakly with MEFV. Interacts with AVIL.

It localises to the cytoplasm. It is found in the cytoskeleton. The protein localises to the cell projection. The protein resides in the nucleus. Its function is as follows. ATP-binding component of the Arp2/3 complex, a multiprotein complex that mediates actin polymerization upon stimulation by nucleation-promoting factor (NPF). The Arp2/3 complex mediates the formation of branched actin networks in the cytoplasm, providing the force for cell motility. Seems to contact the pointed end of the daughter actin filament. In podocytes, required for the formation of lamellipodia downstream of AVIL and PLCE1 regulation. In addition to its role in the cytoplasmic cytoskeleton, the Arp2/3 complex also promotes actin polymerization in the nucleus, thereby regulating gene transcription and repair of damaged DNA. The Arp2/3 complex promotes homologous recombination (HR) repair in response to DNA damage by promoting nuclear actin polymerization, leading to drive motility of double-strand breaks (DSBs). Plays a role in ciliogenesis. The chain is Actin-related protein 3 (ACTR3) from Bos taurus (Bovine).